A 401-amino-acid polypeptide reads, in one-letter code: Formate-dependent phosphoribosylglycinamide formyltransferase (401 aa).

N(1)-(5-phospho-beta-D-ribosyl)glycinamide-binding positions include 22–23 (EL) and E82. ATP-binding positions include R115, K157, 162–167 (SSGKGQ), 197–200 (EGFV), and E205. Positions 120–315 (RLAAETLALP…EFELHARAIL (196 aa)) constitute an ATP-grasp domain. The Mg(2+) site is built by E274 and E286. N(1)-(5-phospho-beta-D-ribosyl)glycinamide-binding positions include D293, K362, and 369-370 (RR).

Belongs to the PurK/PurT family. Homodimer.

It catalyses the reaction N(1)-(5-phospho-beta-D-ribosyl)glycinamide + formate + ATP = N(2)-formyl-N(1)-(5-phospho-beta-D-ribosyl)glycinamide + ADP + phosphate + H(+). The protein operates within purine metabolism; IMP biosynthesis via de novo pathway; N(2)-formyl-N(1)-(5-phospho-D-ribosyl)glycinamide from N(1)-(5-phospho-D-ribosyl)glycinamide (formate route): step 1/1. Involved in the de novo purine biosynthesis. Catalyzes the transfer of formate to 5-phospho-ribosyl-glycinamide (GAR), producing 5-phospho-ribosyl-N-formylglycinamide (FGAR). Formate is provided by PurU via hydrolysis of 10-formyl-tetrahydrofolate. The polypeptide is Formate-dependent phosphoribosylglycinamide formyltransferase (Polaromonas naphthalenivorans (strain CJ2)).